Consider the following 77-residue polypeptide: Large ribosomal subunit protein eL14 (77 aa).

The protein belongs to the eukaryotic ribosomal protein eL14 family.

The protein is Large ribosomal subunit protein eL14 of Methanococcus maripaludis (strain C5 / ATCC BAA-1333).